A 318-amino-acid polypeptide reads, in one-letter code: MADTEEENLQSQIDEVEALTSIYGDEWCVIDEAERIFCITVSDSSNKPTWTLCLQVILPAEYPASSPPLYQLNAPWLRGEDRLTLANNLEEIYLQNLGENILYQWVEKIREFLLGKSQTSDPGPCLKSTSEETDVDDDCEIPAEELNESFKNSMLFGLNDSSGVEEIPPIIHGETITDRRSTFQAHLAPVVSPYQVKLILNKLYENKKIATATHNIYAYRIYIKERNSFIQDCEDDGETAAGKRMLHLMQILDARDVMVVVSRWYGGILLGPDRFKHINNCARNILMEHKYCSAGEESSKQTAKSKKVGKECKKKADH.

Residues 14-116 (DEVEALTSIY…EKIREFLLGK (103 aa)) enclose the RWD domain. A disordered region spans residues 296–318 (EESSKQTAKSKKVGKECKKKADH). Residues 308–318 (VGKECKKKADH) show a composition bias toward basic and acidic residues.

This sequence belongs to the IMPACT family. As to quaternary structure, interacts with GCN1; prevents the interaction of GCN1 with EIF2AK4/GCN2 and inhibits EIF2AK4/GCN2 kinase activity. Interaction with RPL39; this interaction occurs in a GCN1-independent manner. Associates with ribosomes; this interaction occurs in a GCN1-independent manner. Associates with actin; this interaction occurs in a GCN1-independent manner.

It localises to the cytoplasm. Its function is as follows. Translational regulator that ensures constant high levels of translation upon a variety of stress conditions, such as amino acid starvation, UV-C irradiation, proteasome inhibitor treatment and glucose deprivation. Plays a role as a negative regulator of the EIF2AK4/GCN2 kinase activity; impairs GCN1-mediated EIF2AK4/GCN2 activation, and hence EIF2AK4/GCN2-mediated eIF-2-alpha phosphorylation and subsequent down-regulation of protein synthesis. Plays a role in differentiation of neuronal cells by stimulating neurite outgrowth. In Xenopus tropicalis (Western clawed frog), this protein is Protein IMPACT-A (impact-A).